A 329-amino-acid polypeptide reads, in one-letter code: MATRPQPLSVEPEGSADLLHGPEGARGRRGSTQKIEDLMEMVEKLQKVGSLEPRIEVLINRINEVQQAKKKASEELGEAQTVWDTLQKEVDSLHEEKVRLKDILNRKEETLRIMQLHCQEKESEAERKHSMLQECKDRISFLNNQIDNEKAKLRRLRLDFEEHLETLMSQHKDTMEFHKPEHLTEEMSVLDSSKEQLLKEEKLIKAKLEDVQHRLCALCGPEGSSTFSDGLFLRSHEAAAAMQMFKDENKKAEELLEAAAQQHQQLQQRCRQLQQKRQRLKEELEKHGVQILAQIQSTQKEEDSSWRTASPKPLEAHKETVQERPSSRT.

A disordered region spans residues 1 to 33 (MATRPQPLSVEPEGSADLLHGPEGARGRRGSTQ). 2 coiled-coil regions span residues 28–168 (RRGS…ETLM) and 194–294 (KEQL…ILAQ). The interval 295-329 (IQSTQKEEDSSWRTASPKPLEAHKETVQERPSSRT) is disordered. A compositionally biased stretch (basic and acidic residues) spans 314–329 (LEAHKETVQERPSSRT).

This sequence belongs to the SYCE family. In terms of assembly, homodimer. Found in a complex with SYCP1 and SYCE2. Interacts with SYCP1, SYCE2 and SYCE3. Interacts with SIX6OS1.

The protein localises to the nucleus. It localises to the chromosome. Functionally, major component of the transverse central element of synaptonemal complexes (SCS), formed between homologous chromosomes during meiotic prophase. Requires SYCP1 in order to be incorporated into the central element. May have a role in the synaptonemal complex assembly, stabilization and recombination. The protein is Synaptonemal complex central element protein 1 (Syce1) of Rattus norvegicus (Rat).